The sequence spans 175 residues: Large ribosomal subunit protein uL16 (175 aa).

Belongs to the universal ribosomal protein uL16 family.

In Metallosphaera sedula (strain ATCC 51363 / DSM 5348 / JCM 9185 / NBRC 15509 / TH2), this protein is Large ribosomal subunit protein uL16.